Consider the following 343-residue polypeptide: Probable dual-specificity RNA methyltransferase RlmN (343 aa).

Residue Glu91 is the Proton acceptor of the active site. The 230-residue stretch at 97 to 326 (HPDRITACIS…AEIRREKGTD (230 aa)) folds into the Radical SAM core domain. Cysteines 104 and 331 form a disulfide. Residues Cys111, Cys115, and Cys118 each coordinate [4Fe-4S] cluster. Residues 158–159 (GE), Ser190, 213–215 (SLH), and Asn289 contribute to the S-adenosyl-L-methionine site. Catalysis depends on Cys331, which acts as the S-methylcysteine intermediate.

This sequence belongs to the radical SAM superfamily. RlmN family. Requires [4Fe-4S] cluster as cofactor.

Its subcellular location is the cytoplasm. The enzyme catalyses adenosine(2503) in 23S rRNA + 2 reduced [2Fe-2S]-[ferredoxin] + 2 S-adenosyl-L-methionine = 2-methyladenosine(2503) in 23S rRNA + 5'-deoxyadenosine + L-methionine + 2 oxidized [2Fe-2S]-[ferredoxin] + S-adenosyl-L-homocysteine. It catalyses the reaction adenosine(37) in tRNA + 2 reduced [2Fe-2S]-[ferredoxin] + 2 S-adenosyl-L-methionine = 2-methyladenosine(37) in tRNA + 5'-deoxyadenosine + L-methionine + 2 oxidized [2Fe-2S]-[ferredoxin] + S-adenosyl-L-homocysteine. Its function is as follows. Specifically methylates position 2 of adenine 2503 in 23S rRNA and position 2 of adenine 37 in tRNAs. The sequence is that of Probable dual-specificity RNA methyltransferase RlmN from Thermotoga maritima (strain ATCC 43589 / DSM 3109 / JCM 10099 / NBRC 100826 / MSB8).